Consider the following 687-residue polypeptide: Macrolide export ATP-binding/permease protein MacB (687 aa).

Residues 6-244 (LKLAAVTRRF…LAEAGVDAAE (239 aa)) enclose the ABC transporter domain. ATP is bound at residue 42-49 (GASGSGKS). The span at 246-256 (AEASEAAVGES) shows a compositional bias: low complexity. Residues 246–281 (AEASEAAVGESPTRNRHDTPAPPAAVDTDPHVDTGT) form a disordered region. 4 helical membrane passes run 312 to 332 (LLTM…VAIG), 560 to 580 (LTLL…IGVM), 617 to 637 (LVCL…GALF), and 650 to 670 (AGAI…FGFM).

This sequence belongs to the ABC transporter superfamily. Macrolide exporter (TC 3.A.1.122) family. As to quaternary structure, homodimer.

Its subcellular location is the cell inner membrane. Its function is as follows. Non-canonical ABC transporter that contains transmembrane domains (TMD), which form a pore in the inner membrane, and an ATP-binding domain (NBD), which is responsible for energy generation. Confers resistance against macrolides. The polypeptide is Macrolide export ATP-binding/permease protein MacB (Burkholderia lata (strain ATCC 17760 / DSM 23089 / LMG 22485 / NCIMB 9086 / R18194 / 383)).